A 60-amino-acid polypeptide reads, in one-letter code: uncharacterized protein (60 aa).

This is an uncharacterized protein from Enterobacteria phage T4 (Bacteriophage T4).